We begin with the raw amino-acid sequence, 246 residues long: 2',3'-cyclic-nucleotide 3'-phosphodiesterase (246 aa).

The Proton donor/acceptor role is filled by H40. T42 lines the substrate pocket. Polar residues predominate over residues Q133 to T146. The tract at residues Q133–T159 is disordered. The span at I147–S156 shows a compositional bias: basic residues. The active-site Proton donor/acceptor is the H188. 2 residues coordinate substrate: S190 and Y193.

The protein belongs to the 2H phosphoesterase superfamily. CPD1 family.

Its subcellular location is the golgi apparatus. It catalyses the reaction a nucleoside 2',3'-cyclic phosphate + H2O = a nucleoside 2'-phosphate + H(+). Functionally, involved in the metabolism of ADP-ribose 1',2'-cyclic phosphate which is produced as a consequence of tRNA splicing. The chain is 2',3'-cyclic-nucleotide 3'-phosphodiesterase (CPD1) from Candida albicans (strain SC5314 / ATCC MYA-2876) (Yeast).